Reading from the N-terminus, the 205-residue chain is Imidazole glycerol phosphate synthase subunit HisH (205 aa).

The Glutamine amidotransferase type-1 domain maps to 1–205; sequence MIALVDYGGG…FFKMALGDKK (205 aa). Cys79 serves as the catalytic Nucleophile. Active-site residues include His181 and Glu183.

Heterodimer of HisH and HisF.

The protein resides in the cytoplasm. The enzyme catalyses 5-[(5-phospho-1-deoxy-D-ribulos-1-ylimino)methylamino]-1-(5-phospho-beta-D-ribosyl)imidazole-4-carboxamide + L-glutamine = D-erythro-1-(imidazol-4-yl)glycerol 3-phosphate + 5-amino-1-(5-phospho-beta-D-ribosyl)imidazole-4-carboxamide + L-glutamate + H(+). It catalyses the reaction L-glutamine + H2O = L-glutamate + NH4(+). Its pathway is amino-acid biosynthesis; L-histidine biosynthesis; L-histidine from 5-phospho-alpha-D-ribose 1-diphosphate: step 5/9. IGPS catalyzes the conversion of PRFAR and glutamine to IGP, AICAR and glutamate. The HisH subunit catalyzes the hydrolysis of glutamine to glutamate and ammonia as part of the synthesis of IGP and AICAR. The resulting ammonia molecule is channeled to the active site of HisF. This chain is Imidazole glycerol phosphate synthase subunit HisH, found in Dehalococcoides mccartyi (strain ATCC BAA-2266 / KCTC 15142 / 195) (Dehalococcoides ethenogenes (strain 195)).